Reading from the N-terminus, the 1464-residue chain is Neuropathy target esterase sws (1464 aa).

Residues 1-34 lie on the Lumenal side of the membrane; sequence MDVLELLRASATGCYNTIFSEAWHQYVHKQIAAA. The chain crosses the membrane as a helical span at residues 35-55; it reads VYWYGALFLLGVLLFVWFLYF. Residues 56–1464 lie on the Cytoplasmic side of the membrane; the sequence is KRLARLRLRD…GNTTNNDTKN (1409 aa). Position 176-303 (176-303) interacts with a nucleoside 3',5'-cyclic phosphate; it reads IFGHFEKPIF…IRVIQVIMIR (128 aa). Disordered regions lie at residues 329-393 and 409-438; these read NKNS…LHYH and QQQQ…SSPT. Positions 338-367 are enriched in low complexity; sequence TGQTTSNVQSQTSQATQSRPSGTTRTPTSP. The span at 409-420 shows a compositional bias: polar residues; it reads QQQQSLNSPRRN. Serine 421 is modified (phosphoserine). The span at 422 to 438 shows a compositional bias: low complexity; it reads TAHVSEAAAASTASSPT. A nucleoside 3',5'-cyclic phosphate is bound by residues 456–586 and 575–702; these read ELGL…VVRR and IVLG…LSHR. The PNPLA domain occupies 928–1094; sequence LVLGGGGARG…VNNLPGHLWR (167 aa). The GXGXXG motif lies at 932 to 937; the sequence is GGGARG. The GXSXG motif lies at 959–963; the sequence is GVSIG. Catalysis depends on serine 961, which acts as the Nucleophile. The active-site Proton acceptor is the aspartate 1081. The DGA/G motif lies at 1081 to 1083; it reads DGG. A Phosphoserine modification is found at serine 1175. Disordered regions lie at residues 1352-1374 and 1400-1464; these read VDKA…PTPS and ATNT…DTKN. The span at 1429-1444 shows a compositional bias: basic and acidic residues; the sequence is KRTEQDEHELEHEQVV. Positions 1450–1464 are enriched in polar residues; that stretch reads MDKQQGNTTNNDTKN.

This sequence belongs to the NTE family. Interacts with Pka-C3; interaction inhibits the catalytic function of Pka-C3 and the esterase activity of sws.

It is found in the endoplasmic reticulum membrane. It carries out the reaction a 1-acyl-sn-glycero-3-phosphocholine + H2O = sn-glycerol 3-phosphocholine + a fatty acid + H(+). In terms of biological role, phospholipase B that deacylates intracellular phosphatidylcholine (PtdCho), generating glycerophosphocholine (GroPtdCho). This deacylation occurs at both sn-2 and sn-1 positions of PtdCho. Its specific chemical modification by certain organophosphorus (OP) compounds leads to distal axonopathy. Plays a role in the signaling mechanism between neurons and glia that regulates glia wrapping during development of the adult brain. Essential for membrane lipid homeostasis and cell survival in both neurons and glia of the adult brain. This is Neuropathy target esterase sws from Drosophila grimshawi (Hawaiian fruit fly).